The sequence spans 142 residues: Coactosin-like protein (142 aa).

N-acetylalanine is present on A2. The region spanning 2-130 (ATKIDKEACR…EEDFIRSELK (129 aa)) is the ADF-H domain. The residue at position 23 (S23) is a Phosphoserine. The tract at residues 66-75 (TGDAMSKRSK) is flexible and important for F-actin binding. K102 carries the post-translational modification N6-acetyllysine. A Phosphoserine modification is found at S141.

Belongs to the actin-binding proteins ADF family. Coactosin subfamily. Interacts with 5-lipoxygenase (ALOX5/5LO) in a calcium-independent manner. Binds to F-actin with a stoichiometry of 1:2.

It localises to the cytoplasm. The protein localises to the cytoskeleton. It is found in the nucleus. Functionally, binds to F-actin in a calcium-independent manner. Has no direct effect on actin depolymerization. Acts as a chaperone for ALOX5 (5LO), influencing both its stability and activity in leukotrienes synthesis. The protein is Coactosin-like protein of Rattus norvegicus (Rat).